Consider the following 509-residue polypeptide: Probable cytosol aminopeptidase (509 aa).

Mn(2+) is bound by residues K277 and D282. K289 is a catalytic residue. Mn(2+) contacts are provided by D300, D359, and E361. R363 is a catalytic residue.

Belongs to the peptidase M17 family. Mn(2+) serves as cofactor.

Its subcellular location is the cytoplasm. The catalysed reaction is Release of an N-terminal amino acid, Xaa-|-Yaa-, in which Xaa is preferably Leu, but may be other amino acids including Pro although not Arg or Lys, and Yaa may be Pro. Amino acid amides and methyl esters are also readily hydrolyzed, but rates on arylamides are exceedingly low.. It carries out the reaction Release of an N-terminal amino acid, preferentially leucine, but not glutamic or aspartic acids.. Its function is as follows. Presumably involved in the processing and regular turnover of intracellular proteins. Catalyzes the removal of unsubstituted N-terminal amino acids from various peptides. This chain is Probable cytosol aminopeptidase, found in Chloroherpeton thalassium (strain ATCC 35110 / GB-78).